A 375-amino-acid chain; its full sequence is Elongation factor Tu (375 aa).

The tr-type G domain maps to 10–205; that stretch reads KPHINVGAIG…TMDKYFVIPE (196 aa). Residues 19 to 26 form a G1 region; the sequence is GHVDHGKT. GTP is bound at residue 19 to 26; that stretch reads GHVDHGKT. A Mg(2+)-binding site is contributed by Thr26. The segment at 60–64 is G2; that stretch reads GITIN. The G3 stretch occupies residues 81–84; it reads DCPG. GTP contacts are provided by residues 81–85 and 136–139; these read DCPGH and NKMD. The segment at 136–139 is G4; it reads NKMD. The interval 173–175 is G5; that stretch reads SAF.

The protein belongs to the TRAFAC class translation factor GTPase superfamily. Classic translation factor GTPase family. EF-Tu/EF-1A subfamily. Monomer.

The protein localises to the cytoplasm. The enzyme catalyses GTP + H2O = GDP + phosphate + H(+). Functionally, GTP hydrolase that promotes the GTP-dependent binding of aminoacyl-tRNA to the A-site of ribosomes during protein biosynthesis. The polypeptide is Elongation factor Tu (tuf) (Spirochaeta aurantia).